The chain runs to 91 residues: Large ribosomal subunit protein bL28 (91 aa).

The segment at 1–23 is disordered; sequence MSRVCELTGKGPMSGNNVSHANN.

It belongs to the bacterial ribosomal protein bL28 family.

In Paracoccus denitrificans (strain Pd 1222), this protein is Large ribosomal subunit protein bL28.